The sequence spans 345 residues: S-adenosylmethionine:tRNA ribosyltransferase-isomerase (345 aa).

It belongs to the QueA family. In terms of assembly, monomer.

It localises to the cytoplasm. The enzyme catalyses 7-aminomethyl-7-carbaguanosine(34) in tRNA + S-adenosyl-L-methionine = epoxyqueuosine(34) in tRNA + adenine + L-methionine + 2 H(+). It participates in tRNA modification; tRNA-queuosine biosynthesis. Functionally, transfers and isomerizes the ribose moiety from AdoMet to the 7-aminomethyl group of 7-deazaguanine (preQ1-tRNA) to give epoxyqueuosine (oQ-tRNA). The protein is S-adenosylmethionine:tRNA ribosyltransferase-isomerase of Shewanella oneidensis (strain ATCC 700550 / JCM 31522 / CIP 106686 / LMG 19005 / NCIMB 14063 / MR-1).